The primary structure comprises 469 residues: UDP-N-acetylmuramate--L-alanine ligase (469 aa).

123–129 (GSHGKTT) lines the ATP pocket.

The protein belongs to the MurCDEF family.

The protein localises to the cytoplasm. The enzyme catalyses UDP-N-acetyl-alpha-D-muramate + L-alanine + ATP = UDP-N-acetyl-alpha-D-muramoyl-L-alanine + ADP + phosphate + H(+). Its pathway is cell wall biogenesis; peptidoglycan biosynthesis. Cell wall formation. The sequence is that of UDP-N-acetylmuramate--L-alanine ligase from Synechococcus sp. (strain CC9605).